A 465-amino-acid chain; its full sequence is Phytase A (465 aa).

An N-terminal signal peptide occupies residues 1–26 (MVTLTFLLSAAYLLSGRVSAAPSSAG). Cys-30 and Cys-39 form a disulfide bridge. 1D-myo-inositol hexakisphosphate-binding residues include Gln-49, Tyr-50, Arg-80, His-81, Arg-84, and Thr-87. Disulfide bonds link Cys-70–Cys-412, Cys-213–Cys-463, Cys-262–Cys-280, and Cys-434–Cys-442. His-81 functions as the Nucleophile in the catalytic mechanism. An N-linked (GlcNAc...) asparagine glycan is attached at Asn-104. Arg-164 serves as a coordination point for 1D-myo-inositol hexakisphosphate. N-linked (GlcNAc...) asparagine glycosylation is present at Asn-205. Asp-209 lines the 1D-myo-inositol hexakisphosphate pocket. The N-linked (GlcNAc...) asparagine glycan is linked to Asn-228. 1D-myo-inositol hexakisphosphate is bound at residue Lys-299. Residues Asn-337 and Asn-350 are each glycosylated (N-linked (GlcNAc...) asparagine). His-359 and Asp-360 together coordinate 1D-myo-inositol hexakisphosphate. N-linked (GlcNAc...) asparagine glycosylation occurs at Asn-374.

It belongs to the histidine acid phosphatase family. In terms of assembly, monomer.

The protein resides in the secreted. It catalyses the reaction 1D-myo-inositol hexakisphosphate + H2O = 1D-myo-inositol 1,2,4,5,6-pentakisphosphate + phosphate. The catalysed reaction is 1D-myo-inositol 1,2,4,5,6-pentakisphosphate + H2O = 1D-myo-inositol 1,2,5,6-tetrakisphosphate + phosphate. The enzyme catalyses 1D-myo-inositol 1,2,5,6-tetrakisphosphate + H2O = 1D-myo-inositol 1,2,6-trisphosphate + phosphate. It carries out the reaction 1D-myo-inositol 1,2,6-trisphosphate + H2O = 1D-myo-inositol 1,2-bisphosphate + phosphate. It catalyses the reaction 1D-myo-inositol 1,2-bisphosphate + H2O = 1D-myo-inositol 2-phosphate + phosphate. In terms of biological role, catalyzes the phosphate monoester hydrolysis of phytic acid (myo-inositol hexakisphosphate), which results in the stepwise formation of myo-inositol pentakis-, tetrakis-, tris-, bis-, and monophosphates, as well as the liberation of inorganic phosphate. Myo-inositol 2-monophosphate is the end product. Has a broad substrate specificity and is also able to dephosphorylate other classic acid phosphatase substrates such as p-nitrophenyl phosphate, phenyl phosphate, fructose 1,6-bisphosphate, fructose 6-phosphate, glucose 6-phosphate, ribose 5-phosphate, alpha-glycerophosphate, beta-glycerophosphate, 3-phosphoglycerate, phosphoenolpyruvate, as well as ADP and ATP. The chain is Phytase A (phyA) from Aspergillus fumigatus (strain ATCC MYA-4609 / CBS 101355 / FGSC A1100 / Af293) (Neosartorya fumigata).